We begin with the raw amino-acid sequence, 351 residues long: MHQSLTQQRSSDMSLPDSMGAFNRRKRNSIYVTVTLLIVSVLILTVGLAATTRTQNVTVGGYYPGVILGFGSFLGIIGSNLIENKRQMLVASIVFISFGVIAAFCCAIVDGVFAARHIDLKPLYANRCHYVPKTSQKEAEEVITSSSKITPSTRALRNLTQAVKEVNCPQLSRGLCTPRIRGNTCFCCDLYNCGNRVEITGGYYEYIDVSSCQDIIHLYHLLWSATILNIVGLFLGIITAAVLGGFKDMNPTRPALNCSVENAHPTVSYYARPQVASYNTYYHSPPHLPPYSAYDFQHSGVFPSSPPSGLSDEQEPQSPSPSPSYMWSSSAPPRYSPPYYPPFEKPPPYSP.

Transmembrane regions (helical) follow at residues 30 to 50, 57 to 77, 89 to 109, and 226 to 246; these read IYVT…GLAA, VTVG…LGII, LVAS…CAIV, and TILN…LGGF. The tract at residues 302-331 is disordered; sequence FPSSPPSGLSDEQEPQSPSPSPSYMWSSSA.

The protein belongs to the TMEM255 family.

It localises to the membrane. This Rattus norvegicus (Rat) protein is Transmembrane protein 255A (Tmem255a).